Here is a 119-residue protein sequence, read N- to C-terminus: DNA-binding protein MmarC7_1157 (119 aa).

The span at 1–12 shows a compositional bias: basic and acidic residues; the sequence is MNPEEIRQRRLQ. The disordered stretch occupies residues 1-37; sequence MNPEEIRQRRLQEMQAKAQEQGAANDPEAQRQAQEQQ.

Belongs to the PDCD5 family.

This Methanococcus maripaludis (strain C7 / ATCC BAA-1331) protein is DNA-binding protein MmarC7_1157.